Here is a 94-residue protein sequence, read N- to C-terminus: PTS system galactitol-specific EIIB component (94 aa).

Residues 1-94 (MKRKIIVACG…QNKILTILQG (94 aa)) form the PTS EIIB type-2 domain. C9 functions as the Phosphocysteine intermediate; for EIIB activity in the catalytic mechanism. C9 carries the phosphocysteine; by EIIA modification.

Forms a complex with one each of subunit of GatA, GatB and 2 subunits of GatC.

It is found in the cytoplasm. The catalysed reaction is galactitol(out) + N(pros)-phospho-L-histidyl-[protein] = galactitol 1-phosphate(in) + L-histidyl-[protein]. The phosphoenolpyruvate-dependent sugar phosphotransferase system (PTS), a major carbohydrate active transport system, catalyzes the phosphorylation of incoming sugar substrates concomitant with their translocation across the cell membrane. The enzyme II complex composed of GatA, GatB and GatC is involved in galactitol transport. It can also use D-glucitol. In Escherichia coli (strain K12), this protein is PTS system galactitol-specific EIIB component.